The chain runs to 112 residues: Photosystem II reaction center Psb28 protein (112 aa).

Belongs to the Psb28 family. Part of the photosystem II complex.

It localises to the plastid. The protein resides in the cyanelle thylakoid membrane. The chain is Photosystem II reaction center Psb28 protein from Cyanophora paradoxa.